The sequence spans 616 residues: MPKYRSATTTHGRNMAGARALWRATGMTDSDFGKPIIAVVNSFTQFVPGHVHLRDLGKLVAEQIEASGGVAKEFNTIAVDDGIAMGHGGMLYSLPSRELIADSVEYMVNAHCADAMVCISNCDKITPGMLMASLRLNIPVIFVSGGPMEAGKTKLSDQIIKLDLVDAMIQGADPKVSDDQSNQVERSACPTCGSCSGMFTANSMNCLTEALGLSQPGNGSLLATHADRKQLFLNAGKRIVELTKRYYEQDDESALPRNIANKAAFENAMTLDIAMGGSTNTVLHLLAAAQEAEIDFTMSDIDKLSRKVPQLCKVAPSTQKYHMEDVHRAGGVLGILGELDRAGLLNRNVKNVLGLTLPQTLEQYDITVTQDEAVKKMFRAGPAGIRTTQAFSQDCRWDSLDDDRAAGCIRSLEYAYSKDGGLAVLYGNFAENGCIVKTAGVDDSILKFTGPAKVYESQDDAVEAILGGKVVEGDVVVIRYEGPKGGPGMQEMLYPTSFLKSMGLGKACALITDGRFSGGTSGLSIGHVSPEAASGGTIALIEDGDTIAIDIPNRSIQLQLSEAEIAARREAQEARGDKAWTPKNRQRQVSFALRAYASLATSADKGAVRDKSKLGG.

D81 contributes to the Mg(2+) binding site. C122 contacts [2Fe-2S] cluster. Positions 123 and 124 each coordinate Mg(2+). K124 carries the N6-carboxylysine modification. C195 serves as a coordination point for [2Fe-2S] cluster. Residue E491 participates in Mg(2+) binding. The active-site Proton acceptor is the S517.

This sequence belongs to the IlvD/Edd family. As to quaternary structure, homodimer. The cofactor is [2Fe-2S] cluster. Requires Mg(2+) as cofactor.

It carries out the reaction (2R)-2,3-dihydroxy-3-methylbutanoate = 3-methyl-2-oxobutanoate + H2O. The catalysed reaction is (2R,3R)-2,3-dihydroxy-3-methylpentanoate = (S)-3-methyl-2-oxopentanoate + H2O. Its pathway is amino-acid biosynthesis; L-isoleucine biosynthesis; L-isoleucine from 2-oxobutanoate: step 3/4. It functions in the pathway amino-acid biosynthesis; L-valine biosynthesis; L-valine from pyruvate: step 3/4. In terms of biological role, functions in the biosynthesis of branched-chain amino acids. Catalyzes the dehydration of (2R,3R)-2,3-dihydroxy-3-methylpentanoate (2,3-dihydroxy-3-methylvalerate) into 2-oxo-3-methylpentanoate (2-oxo-3-methylvalerate) and of (2R)-2,3-dihydroxy-3-methylbutanoate (2,3-dihydroxyisovalerate) into 2-oxo-3-methylbutanoate (2-oxoisovalerate), the penultimate precursor to L-isoleucine and L-valine, respectively. In Salmonella paratyphi A (strain ATCC 9150 / SARB42), this protein is Dihydroxy-acid dehydratase.